The following is a 299-amino-acid chain: Acetylglutamate kinase (299 aa).

Substrate-binding positions include 68-69 (GG), Arg-90, and Asn-194.

It belongs to the acetylglutamate kinase family. ArgB subfamily.

The protein resides in the cytoplasm. The enzyme catalyses N-acetyl-L-glutamate + ATP = N-acetyl-L-glutamyl 5-phosphate + ADP. It participates in amino-acid biosynthesis; L-arginine biosynthesis; N(2)-acetyl-L-ornithine from L-glutamate: step 2/4. In terms of biological role, catalyzes the ATP-dependent phosphorylation of N-acetyl-L-glutamate. This is Acetylglutamate kinase from Psychrobacter cryohalolentis (strain ATCC BAA-1226 / DSM 17306 / VKM B-2378 / K5).